The following is a 180-amino-acid chain: Pro-glucagon (180 aa).

Residues 1–20 (MKTVYIVAGLFVMLVQGSWQ) form the signal peptide. Residues 23–59 (PQDTEENARSFPASQTEPLEDPDQINEDKRHSQGTFT) form a disordered region. Serine 54 bears the Phosphoserine mark. The propeptide occupies 84 to 89 (NRNNIA). Phosphoserine is present on residues serine 105 and serine 108. Arginine 127 carries the post-translational modification Arginine amide. Residues 131–145 (DFPEEVAIAEELGRR) constitute a propeptide that is removed on maturation. Serine 150 and serine 152 each carry phosphoserine.

The protein belongs to the glucagon family. Proglucagon is post-translationally processed in a tissue-specific manner in pancreatic A cells and intestinal L cells. In pancreatic A cells, the major bioactive hormone is glucagon cleaved by PCSK2/PC2. In the intestinal L cells PCSK1/PC1 liberates GLP-1, GLP-2, glicentin and oxyntomodulin. GLP-1 is further N-terminally truncated by post-translational processing in the intestinal L cells resulting in GLP-1(7-37) GLP-1-(7-36)amide. The C-terminal amidation is neither important for the metabolism of GLP-1 nor for its effects on the endocrine pancreas. As to expression, glucagon is secreted in the A cells of the islets of Langerhans. GLP-1, GLP-2, oxyntomodulin and glicentin are secreted from enteroendocrine cells throughout the gastrointestinal tract.

It localises to the secreted. In terms of biological role, plays a key role in glucose metabolism and homeostasis. Regulates blood glucose by increasing gluconeogenesis and decreasing glycolysis. A counterregulatory hormone of insulin, raises plasma glucose levels in response to insulin-induced hypoglycemia. Plays an important role in initiating and maintaining hyperglycemic conditions in diabetes. Potent stimulator of glucose-dependent insulin release. Also stimulates insulin release in response to IL6. Plays important roles on gastric motility and the suppression of plasma glucagon levels. May be involved in the suppression of satiety and stimulation of glucose disposal in peripheral tissues, independent of the actions of insulin. Has growth-promoting activities on intestinal epithelium. May also regulate the hypothalamic pituitary axis (HPA) via effects on LH, TSH, CRH, oxytocin, and vasopressin secretion. Increases islet mass through stimulation of islet neogenesis and pancreatic beta cell proliferation. Inhibits beta cell apoptosis. Functionally, stimulates intestinal growth and up-regulates villus height in the small intestine, concomitant with increased crypt cell proliferation and decreased enterocyte apoptosis. The gastrointestinal tract, from the stomach to the colon is the principal target for GLP-2 action. Plays a key role in nutrient homeostasis, enhancing nutrient assimilation through enhanced gastrointestinal function, as well as increasing nutrient disposal. Stimulates intestinal glucose transport and decreases mucosal permeability. Its function is as follows. May modulate gastric acid secretion and the gastro-pyloro-duodenal activity. May play an important role in intestinal mucosal growth in the early period of life. In terms of biological role, oxyntomodulin significantly reduces food intake. The polypeptide is Pro-glucagon (Gcg) (Rattus norvegicus (Rat)).